Reading from the N-terminus, the 295-residue chain is Protein U26 (295 aa).

8 helical membrane-spanning segments follow: residues 4-24, 31-51, 66-86, 103-123, 183-203, 218-238, 243-263, and 274-294; these read LTDS…LYTF, SPLG…LTFK, IVFL…VVMI, VMIM…SLFF, FTVE…FLSM, VFFK…ILSG, VCLY…SIML, and FYAG…MYFG.

It is found in the membrane. In Human herpesvirus 6A (strain Uganda-1102) (HHV-6 variant A), this protein is Protein U26 (U26).